The following is a 491-amino-acid chain: Proline--tRNA ligase (491 aa).

Belongs to the class-II aminoacyl-tRNA synthetase family. ProS type 3 subfamily. Homodimer.

It is found in the cytoplasm. It carries out the reaction tRNA(Pro) + L-proline + ATP = L-prolyl-tRNA(Pro) + AMP + diphosphate. In terms of biological role, catalyzes the attachment of proline to tRNA(Pro) in a two-step reaction: proline is first activated by ATP to form Pro-AMP and then transferred to the acceptor end of tRNA(Pro). The sequence is that of Proline--tRNA ligase from Cytophaga hutchinsonii (strain ATCC 33406 / DSM 1761 / CIP 103989 / NBRC 15051 / NCIMB 9469 / D465).